The primary structure comprises 663 residues: MGLYRVRVSTGSSFYAGSQNQVQLWLVGQHGEAALGWCLRPARGKETEFSVDVSEYLGPLLFVKLRKRHLLQDDAWFCNWISVQGPGANGDEFRFPCYRWVEGDRILSLPEGTARTVVDDPQGLFKKHREEELAERRKLYRWGNWKDGLILNIASTGIHDLPVDERFLEDKRIDFEASLAKGLADLAVKDSLNVLMSWNSLDSFNRIFWCGQSKLAERVRDSWKEDALFGYQFLNGTNPMLLRHSVELPARLKFPPGMEELQAQLEKELQGGTLFEADFSLLDGIKANVILCSQQYLAVPLVMLKLQPDGKLLPMVIQLQLPHEGSPLPPLFLPTDPPMVWLLAKCWVRSSDFQLHELHSHLLRGHLMAEVIAVATMRCLPSIHPIFKLLIPHFRYTMEINVRARNGLVSDLGIFDQVVSTGGGGHVELLRRAAALLTYSSFCPPDDLADRGLLGVESSFYAQDALRLWEVISRYVEGIVSLHYKTDESVKEDLELQAWCREFTEIGLLGAQDRGFPVSLQSKEQLCHFVTMCIFTCTGQHSSNHLGQLDWYSWVPNAPCTMRLPPPTTKDATLETVMATLPNFHQASLQMSITWQLGRCQPTMVALGQHEEEYFSGPGPKAVLTKFREELAALDKDIEVRNAKLALPYEYLRPSRVENSVAI.

The PLAT domain maps to 2–115; that stretch reads GLYRVRVSTG…ILSLPEGTAR (114 aa). Positions 116 to 663 constitute a Lipoxygenase domain; it reads TVVDDPQGLF…PSRVENSVAI (548 aa). His-361, His-366, His-541, His-545, and Ile-663 together coordinate Fe cation.

It belongs to the lipoxygenase family. In terms of assembly, interacts with PEBP1; in response to IL13/interleukin-13, prevents the interaction of PEBP1 with RAF1 to activate the ERK signaling cascade. Requires Fe cation as cofactor.

Its subcellular location is the cytoplasm. The protein localises to the cytosol. The protein resides in the cell membrane. It is found in the lipid droplet. The enzyme catalyses (5Z,8Z,11Z,14Z)-eicosatetraenoate + O2 = (12S)-hydroperoxy-(5Z,8Z,10E,14Z)-eicosatetraenoate. It catalyses the reaction (5Z,8Z,11Z,14Z)-eicosatetraenoate + O2 = (15S)-hydroperoxy-(5Z,8Z,11Z,13E)-eicosatetraenoate. The catalysed reaction is (9Z,12Z)-octadecadienoate + O2 = (13S)-hydroperoxy-(9Z,11E)-octadecadienoate. It carries out the reaction (5Z,8Z,11Z,14Z)-eicosatetraenoate + 2 O2 = (14R,15S)-dihydroperoxy-(5Z,8Z,10E,12E)-eicosatetraenoate. The enzyme catalyses (5Z,8Z,11Z,14Z)-eicosatetraenoate + 2 O2 = (8S,15S)-dihydroperoxy-(5Z,9E,11Z,13E)-eicosatetraenoate. It catalyses the reaction (14S,15R)-epoxy-(5Z,8Z,11Z)-eicosatrienoate + O2 = (8S)-hydroperoxy-(14S,15R)-epoxy-(5Z,9E,11Z)-eicosatrienoate. The catalysed reaction is (14S,15R)-epoxy-(5Z,8Z,11Z)-eicosatrienoate + O2 = (12S)-hydroperoxy-(14S,15R)-epoxy-(5Z,8Z,10E)-eicosatrienoate. It carries out the reaction (14R,15S)-epoxy-(5Z,8Z,11Z)-eicosatrienoate + O2 = (5S)-hydroperoxy-(14R,15S)-epoxy-(6E,8Z,11Z)-eicosatrienoate. The enzyme catalyses (14R,15S)-epoxy-(5Z,8Z,11Z)-eicosatrienoate + O2 = (12S)-hydroperoxy-(14R,15S)-epoxy-(5Z,8Z,10E)-eicosatrienoate. It catalyses the reaction (15R)-hydroperoxy-(5Z,8Z,11Z,13E)-eicosatetraenoate = 15-oxo-(5Z,8Z,11Z,13E)-eicosatetraenoate + H2O. The catalysed reaction is (15S)-hydroperoxy-(5Z,8Z,11Z,13E)-eicosatetraenoate = (14S,15S)-epoxy-(5Z,8Z,10E,12E)-eicosatetraenoate + H2O. It carries out the reaction (12S)-hydroperoxy-(5Z,8Z,10E,14Z)-eicosatetraenoate = (8S)-hydroxy-(11S,12S)-epoxy-(5Z,9E,14Z)-eicosatrienoate. The enzyme catalyses (4Z,7Z,10Z,13Z,16Z,19Z)-docosahexaenoate + O2 = 14-hydroperoxy-(4Z,7Z,10Z,12E,16Z,19Z)-docosahexaenoate. It catalyses the reaction (4Z,7Z,10Z,13Z,16Z)-docosapentaenoate + O2 = 14-hydroperoxy-(4Z,7Z,10Z,12E,16Z)-docosapentaenoate. The catalysed reaction is (7Z,10Z,13Z,16Z,19Z)-docosapentaenoate + O2 = 14-hydroperoxy-(7Z,10Z,12E,16Z,19Z)-docosapentaenoate. It carries out the reaction (4Z,7Z,10Z,13Z,16Z,19Z)-docosahexaenoate + O2 = (14S)-hydroperoxy-(4Z,7Z,10Z,12E,16Z,19Z)-docosahexaenoate. The enzyme catalyses (4Z,7Z,10Z,13Z,16Z,19Z)-docosahexaenoate + O2 = (17S)-hydroperoxy-(4Z,7Z,10Z,13Z,15E,19Z)-docosahexaenoate. It catalyses the reaction (7S)-hydroperoxy-(4Z,8E,10Z,13Z,16Z,19Z)-docosahexaenoate + O2 = (7S,14S)-dihydroperoxy-(4Z,8E,10Z,12E,16Z,19Z)-docosahexaenoate. The catalysed reaction is (7S)-hydroperoxy-(4Z,8E,10Z,13Z,16Z,19Z)-docosahexaenoate + O2 = (7S,17S)-dihydroperoxy-(4Z,8E,10Z,13Z,15E,19Z)-docosahexaenoate. It carries out the reaction (4Z,7Z,10Z,13Z,16Z,19Z)-docosahexaenoate + O2 = (11S)-hydroperoxy-(4Z,7Z,9E,13Z,16Z,19Z)-docosahexaenoate. The enzyme catalyses N-(5Z,8Z,11Z,14Z)-eicosatetraenoyl-taurine + O2 = N-(12S)-hydroperoxy-(5Z,8Z,10E,14Z)-eicosatetraenoyl-taurine. It catalyses the reaction N-(5Z,8Z,11Z,14Z)-eicosatetraenoyl-gamma-aminobutanoate + O2 = N-(12S)-hydroperoxy-(5Z,8Z,10E,14Z)-eicosatetraenoyl-gamma-aminobutanoate. The catalysed reaction is N-(5Z,8Z,11Z,14Z)-eicosatetraenoyl-glycine + O2 = N-(12S)-hydroperoxy-(5Z,8Z,10E,14Z)-eicosatetraenoyl-glycine. It carries out the reaction N-(5Z,8Z,11Z,14Z)-eicosatetraenoyl-L-alanine + O2 = N-(12S)-hydroperoxy-(5Z,8Z,10E,14Z)-eicosatetraenoyl-alanine. The enzyme catalyses N-(5Z,8Z,11Z,14Z)-eicosatetraenoyl-taurine + O2 = N-(15S)-hydroperoxy-(5Z,8Z,11Z,13E)-eicosatetraenoyl-taurine. It catalyses the reaction N-(5Z,8Z,11Z,14Z)-eicosatetraenoyl-gamma-aminobutanoate + O2 = N-(15S)-hydroperoxy-(5Z,8Z,11Z,13E)-eicosatetraenoyl-gamma-aminobutanoate. The catalysed reaction is N-(5Z,8Z,11Z,14Z)-eicosatetraenoyl-glycine + O2 = N-(15S)-hydroperoxy-(5Z,8Z,11Z,13E)-eicosatetraenoyl-glycine. It carries out the reaction N-(5Z,8Z,11Z,14Z)-eicosatetraenoyl-L-alanine + O2 = N-(15S)-hydroperoxy-(5Z,8Z,11Z,13E)-eicosatetraenoyl-alanine. It functions in the pathway lipid metabolism; hydroperoxy eicosatetraenoic acid biosynthesis. In terms of biological role, non-heme iron-containing dioxygenase that catalyzes the stereo-specific peroxidation of free and esterified polyunsaturated fatty acids generating a spectrum of bioactive lipid mediators. It inserts peroxyl groups at C12 or C15 of arachidonate ((5Z,8Z,11Z,14Z)-eicosatetraenoate) producing both 12-hydroperoxyeicosatetraenoate/12-HPETE and 15-hydroperoxyeicosatetraenoate/15-HPETE. It may then act on 12-HPETE to produce hepoxilins, which may show pro-inflammatory properties. Can also peroxidize linoleate ((9Z,12Z)-octadecadienoate) to 13-hydroperoxyoctadecadienoate. May participate in the sequential oxidations of DHA ((4Z,7Z,10Z,13Z,16Z,19Z)-docosahexaenoate) to generate specialized pro-resolving mediators (SPMs)like resolvin D5 ((7S,17S)-diHPDHA) and (7S,14S)-diHPDHA, that actively down-regulate the immune response and have anti-aggregation properties with platelets. Can convert epoxy fatty acids to hydroperoxy-epoxides derivatives followed by an intramolecular nucleophilic substitution leading to the formation of monocyclic endoperoxides. Plays an important role during the maintenance of self-tolerance by peroxidizing membrane-bound phosphatidylethanolamine which can then signal the sorting process for clearance of apoptotic cells during inflammation and prevent an autoimmune response. In addition to its role in the immune and inflammatory responses, this enzyme may play a role in epithelial wound healing in the cornea through production of lipoxin A4 (LXA(4)) and docosahexaenoic acid-derived neuroprotectin D1 (NPD1; 10R,17S-HDHA), both lipid autacoids exhibit anti-inflammatory and neuroprotective properties. Furthermore, it may regulate actin polymerization which is crucial for several biological processes such as the phagocytosis of apoptotic cells. It is also implicated in the generation of endogenous ligands for peroxisome proliferator activated receptor (PPAR-gamma), hence modulating macrophage development and function. It may also exert a negative effect on skeletal development by regulating bone mass through this pathway. As well as participates in ER stress and downstream inflammation in adipocytes, pancreatic islets, and liver. Finally, it is also involved in the cellular response to IL13/interleukin-13. The protein is Polyunsaturated fatty acid lipoxygenase ALOX15 of Sus scrofa (Pig).